Reading from the N-terminus, the 257-residue chain is Ribonuclease PH (257 aa).

Phosphate-binding positions include arginine 86 and 124-126; that span reads GTR.

This sequence belongs to the RNase PH family. In terms of assembly, homohexameric ring arranged as a trimer of dimers.

The catalysed reaction is tRNA(n+1) + phosphate = tRNA(n) + a ribonucleoside 5'-diphosphate. Phosphorolytic 3'-5' exoribonuclease that plays an important role in tRNA 3'-end maturation. Removes nucleotide residues following the 3'-CCA terminus of tRNAs; can also add nucleotides to the ends of RNA molecules by using nucleoside diphosphates as substrates, but this may not be physiologically important. Probably plays a role in initiation of 16S rRNA degradation (leading to ribosome degradation) during starvation. The polypeptide is Ribonuclease PH (Halalkalibacterium halodurans (strain ATCC BAA-125 / DSM 18197 / FERM 7344 / JCM 9153 / C-125) (Bacillus halodurans)).